The chain runs to 180 residues: UPF0227 protein YcfP (180 aa).

This sequence belongs to the UPF0227 family.

The chain is UPF0227 protein YcfP from Salmonella agona (strain SL483).